A 135-amino-acid chain; its full sequence is Galectin-1 (135 aa).

The residue at position 2 (Ala-2) is an N-acetylalanine. Residues 4-135 enclose the Galectin domain; it reads GLVASNLNLK…DFKIKCVAFE (132 aa). N6-acetyllysine occurs at positions 13 and 29. Ser-30 carries the post-translational modification Phosphoserine. Residues 45–49, His-53, Asn-62, and 69–72 each bind a beta-D-galactoside; these read HFNPR and WGAE. The residue at position 108 (Lys-108) is an N6-acetyllysine; alternate. An N6-succinyllysine; alternate modification is found at Lys-108. Residue Lys-128 is modified to N6-acetyllysine.

As to quaternary structure, homodimer. Binds LGALS3BP. Interacts with CD2, CD3, CD4, CD6, CD7, CD43, ALCAM and CD45. Interacts with laminin (via poly-N-acetyllactosamine). Interacts with SUSD2. Interacts with cargo receptor TMED10; the interaction mediates the translocation from the cytoplasm into the ERGIC (endoplasmic reticulum-Golgi intermediate compartment) and thereby secretion.

Its subcellular location is the secreted. The protein resides in the extracellular space. It localises to the extracellular matrix. It is found in the cytoplasm. In terms of biological role, lectin that binds beta-galactoside and a wide array of complex carbohydrates. Plays a role in regulating apoptosis, cell proliferation and cell differentiation. Inhibits CD45 protein phosphatase activity and therefore the dephosphorylation of Lyn kinase. Strong inducer of T-cell apoptosis. The polypeptide is Galectin-1 (LGALS1) (Ovis aries (Sheep)).